Consider the following 123-residue polypeptide: Phosphoribosyl-AMP cyclohydrolase (123 aa).

D81 contributes to the Mg(2+) binding site. Position 82 (C82) interacts with Zn(2+). Residues D83 and D85 each coordinate Mg(2+). Zn(2+)-binding residues include C98 and C105.

Belongs to the PRA-CH family. In terms of assembly, homodimer. The cofactor is Mg(2+). Zn(2+) is required as a cofactor.

The protein localises to the cytoplasm. The enzyme catalyses 1-(5-phospho-beta-D-ribosyl)-5'-AMP + H2O = 1-(5-phospho-beta-D-ribosyl)-5-[(5-phospho-beta-D-ribosylamino)methylideneamino]imidazole-4-carboxamide. It functions in the pathway amino-acid biosynthesis; L-histidine biosynthesis; L-histidine from 5-phospho-alpha-D-ribose 1-diphosphate: step 3/9. Functionally, catalyzes the hydrolysis of the adenine ring of phosphoribosyl-AMP. This Nocardioides sp. (strain ATCC BAA-499 / JS614) protein is Phosphoribosyl-AMP cyclohydrolase.